The following is a 75-amino-acid chain: Putative snRNP Sm-like protein (75 aa).

One can recognise a Sm domain in the interval 4–75 (RPLDVIHRSL…NVLAISPTEE (72 aa)).

This sequence belongs to the snRNP Sm proteins family.

This chain is Putative snRNP Sm-like protein, found in Pyrococcus abyssi (strain GE5 / Orsay).